Here is a 423-residue protein sequence, read N- to C-terminus: Calcium up-regulated protein A (423 aa).

A compositionally biased stretch (basic and acidic residues) spans 1–19 (MINIEDISKSSNESEEKQL). Residues 1–27 (MINIEDISKSSNESEEKQLKSTSTSSK) are disordered. Ricin B-type lectin domains lie at 27–147 (KPKY…WTTF) and 118–251 (QGNG…WGIN).

The protein belongs to the cup family.

Its subcellular location is the cytoplasm. The protein resides in the membrane. May play an important role in stabilizing and/or regulating the cell membrane during Ca(2+) stress or certain stages of development. This chain is Calcium up-regulated protein A (cupA), found in Dictyostelium discoideum (Social amoeba).